Here is a 405-residue protein sequence, read N- to C-terminus: Acetate kinase (405 aa).

Residue Asn-7 coordinates Mg(2+). Residue Lys-14 coordinates ATP. Position 98 (Arg-98) interacts with substrate. Asp-156 acts as the Proton donor/acceptor in catalysis. ATP contacts are provided by residues 215 to 219, 290 to 292, and 338 to 342; these read HLGNG, DLR, and GVGEN. Glu-391 lines the Mg(2+) pocket.

It belongs to the acetokinase family. In terms of assembly, homodimer. Mg(2+) serves as cofactor. The cofactor is Mn(2+).

It is found in the cytoplasm. The catalysed reaction is acetate + ATP = acetyl phosphate + ADP. It functions in the pathway metabolic intermediate biosynthesis; acetyl-CoA biosynthesis; acetyl-CoA from acetate: step 1/2. In terms of biological role, catalyzes the formation of acetyl phosphate from acetate and ATP. Can also catalyze the reverse reaction. The sequence is that of Acetate kinase from Gloeobacter violaceus (strain ATCC 29082 / PCC 7421).